Here is a 1339-residue protein sequence, read N- to C-terminus: Tuberous sclerosis 2 protein homolog (1339 aa).

Serine 1036 carries the post-translational modification Phosphoserine. In terms of domain architecture, Rap-GAP spans 1109–1303; sequence ILANTNPSED…AERLRQLKRL (195 aa).

Interacts with tsc1.

The protein localises to the cytoplasm. It is found in the nucleus. In terms of biological role, together with tsc1, required for uptake of various amino acids from the environment and for proper conjugation. Involved in induction of gene expression of permeases and genes required for meiosis upon nitrogen starvation. May act as a GTPase-activating protein (GAP) for the small GTPase rhb1. The protein is Tuberous sclerosis 2 protein homolog (tsc2) of Schizosaccharomyces pombe (strain 972 / ATCC 24843) (Fission yeast).